A 154-amino-acid polypeptide reads, in one-letter code: Catabolic 3-dehydroquinase (154 aa).

Tyrosine 25 serves as the catalytic Proton acceptor. Substrate-binding residues include asparagine 79, histidine 85, and aspartate 92. The Proton donor role is filled by histidine 105. Substrate contacts are provided by residues 106–107 and arginine 116; that span reads IS.

Belongs to the type-II 3-dehydroquinase family. Homododecamer. Adopts a ring-like structure, composed of an arrangement of two hexameric rings stacked on top of one another.

The enzyme catalyses 3-dehydroquinate = 3-dehydroshikimate + H2O. It functions in the pathway aromatic compound metabolism; 3,4-dihydroxybenzoate biosynthesis; 3,4-dihydroxybenzoate from 3-dehydroquinate: step 1/2. In terms of biological role, is involved in the catabolism of quinate. Allows the utilization of quinate as carbon source via the beta-ketoadipate pathway. The polypeptide is Catabolic 3-dehydroquinase (Sclerotinia sclerotiorum (strain ATCC 18683 / 1980 / Ss-1) (White mold)).